A 206-amino-acid polypeptide reads, in one-letter code: Imidazoleglycerol-phosphate dehydratase (206 aa).

This sequence belongs to the imidazoleglycerol-phosphate dehydratase family.

The protein localises to the cytoplasm. It carries out the reaction D-erythro-1-(imidazol-4-yl)glycerol 3-phosphate = 3-(imidazol-4-yl)-2-oxopropyl phosphate + H2O. It functions in the pathway amino-acid biosynthesis; L-histidine biosynthesis; L-histidine from 5-phospho-alpha-D-ribose 1-diphosphate: step 6/9. This Saccharopolyspora erythraea (strain ATCC 11635 / DSM 40517 / JCM 4748 / NBRC 13426 / NCIMB 8594 / NRRL 2338) protein is Imidazoleglycerol-phosphate dehydratase.